Reading from the N-terminus, the 196-residue chain is Large ribosomal subunit protein uL11m (196 aa).

Belongs to the universal ribosomal protein uL11 family. As to quaternary structure, component of the mitochondrial ribosome large subunit (39S) which comprises a 16S rRNA and about 50 distinct proteins.

The protein resides in the mitochondrion. This chain is Large ribosomal subunit protein uL11m (mRpL11), found in Drosophila melanogaster (Fruit fly).